A 677-amino-acid polypeptide reads, in one-letter code: Pannexin-2 (677 aa).

Residues 11 to 47 (MATALLAGEKLRELILPGAQDDKAGALAALLLQLKLE) are Cytoplasmic-facing. A helical membrane pass occupies residues 48 to 70 (LPFDRVVTIGTVLVPILLVTLVF). The Extracellular segment spans residues 71–123 (TKNFAEEPIYCYTPHNFTRDQALYARGYCWTELRDALPGVDASLWPSLFEHKF). The N-linked (GlcNAc...) asparagine glycan is linked to N86. A helical membrane pass occupies residues 124-146 (LPYALLAFAAIMYVPALGWEFLA). The Cytoplasmic segment spans residues 147-226 (STRLTSELNF…RGRSNFLAKL (80 aa)). The chain crosses the membrane as a helical span at residues 227–249 (YLARHVLILLLSAVPISYLCTYY). The Extracellular segment spans residues 250 to 292 (ATQKQNEFTCALGASPDGAAGAGPAVRVSCKLPSVQLQRIIAG). Residues 293–315 (VDIVLLCVMNLIILVNLIHLFIF) traverse the membrane as a helical segment. At 316–643 (RKSNFIFDKL…AREEEDGGPR (328 aa)) the chain is on the cytoplasmic side. 2 disordered regions span residues 393–423 (ATPTVRDSGVQTVDPSANPAEPDGAAEPPVV) and 454–510 (NSKA…KKHA). The span at 492-504 (GPGPAPAPAPPPA) shows a compositional bias: pro residues. A Phosphoserine modification is found at S593.

Belongs to the pannexin family. In terms of assembly, homoheptameric. In terms of processing, S-palmitoylated in neural stem and progenitor cells. Post-translationally, cleaved by CASP3 and CASP7 during apoptosis. Cleavage has no effect on it function.

The protein resides in the cell membrane. Its subcellular location is the golgi apparatus membrane. The protein localises to the endoplasmic reticulum membrane. It catalyses the reaction ATP(in) = ATP(out). The enzyme catalyses chloride(in) = chloride(out). The catalysed reaction is iodide(out) = iodide(in). It carries out the reaction Na(+)(in) = Na(+)(out). It catalyses the reaction D-gluconate(in) = D-gluconate(out). In terms of biological role, ion channel with a slight anion preference. Also able to release ATP. Plays a role in regulating neurogenesis and apoptosis in keratinocytes. In Homo sapiens (Human), this protein is Pannexin-2.